Here is a 680-residue protein sequence, read N- to C-terminus: Tumor protein 63 (680 aa).

The interval 1-107 (MNFETSRCAT…MQDSDLSDPM (107 aa)) is transcription activation. Residues 123-157 (QIQNGSSSTSPYNTDHAQNSVTAPSPYAQPSSTFD) show a composition bias toward polar residues. The disordered stretch occupies residues 123-171 (QIQNGSSSTSPYNTDHAQNSVTAPSPYAQPSSTFDALSPSPAIPSNTDY). Residues 170–362 (DYPGPHSFDV…KADEDSIRKQ (193 aa)) mediate DNA binding. Residues Cys-244, His-247, Cys-308, and Cys-312 each coordinate Zn(2+). Over residues 351-360 (DRKADEDSIR) the composition is skewed to basic and acidic residues. Disordered regions lie at residues 351-393 (DRKA…IKKR) and 435-472 (YRQQQQQQHQHLLQKQTSIQSPSSYGNSSPPLNKMNSM). Residues 352–388 (RKADEDSIRKQQVSDSTKNGDGTKRPFRQNTHGIQMT) form an interaction with HIPK2 region. Polar residues-rich tracts occupy residues 361-371 (KQQVSDSTKNG) and 379-389 (RQNTHGIQMTS). Positions 394-443 (RSPDDELLYLPVRGRETYEMLLKIKESLELMQYLPQHTIETYRQQQQQQH) are oligomerization. Positions 437–450 (QQQQQQHQHLLQKQ) are enriched in low complexity. Residues 451–472 (TSIQSPSSYGNSSPPLNKMNSM) show a composition bias toward polar residues. Residues 541 to 607 (PPYPTDCSIV…WKGILDHRQL (67 aa)) form the SAM domain. The transactivation inhibition stretch occupies residues 610–680 (FSSPSHLLRT…KQQRIKEEGE (71 aa)). Lys-676 participates in a covalent cross-link: Glycyl lysine isopeptide (Lys-Gly) (interchain with G-Cter in SUMO).

It belongs to the p53 family. In terms of assembly, binds DNA as a homotetramer. Isoform composition of the tetramer may determine transactivation activity. Isoforms Alpha and Gamma interact with HIPK2. Interacts with SSRP1, leading to stimulate coactivator activity. Isoform 1 and isoform 2 interact with WWP1. Interacts with PDS5A. Isoform 5 (via activation domain) interacts with NOC2L. The cofactor is Zn(2+). May be sumoylated. In terms of processing, ubiquitinated. Polyubiquitination involves WWP1 and leads to proteasomal degradation of this protein. Widely expressed, notably in heart, kidney, placenta, prostate, skeletal muscle, testis and thymus, although the precise isoform varies according to tissue type. Progenitor cell layers of skin, breast, eye and prostate express high levels of DeltaN-type isoforms. Isoform 10 is predominantly expressed in skin squamous cell carcinomas, but not in normal skin tissues.

It localises to the nucleus. In terms of biological role, acts as a sequence specific DNA binding transcriptional activator or repressor. The isoforms contain a varying set of transactivation and auto-regulating transactivation inhibiting domains thus showing an isoform specific activity. Isoform 2 activates RIPK4 transcription. May be required in conjunction with TP73/p73 for initiation of p53/TP53 dependent apoptosis in response to genotoxic insults and the presence of activated oncogenes. Involved in Notch signaling by probably inducing JAG1 and JAG2. Plays a role in the regulation of epithelial morphogenesis. The ratio of DeltaN-type and TA*-type isoforms may govern the maintenance of epithelial stem cell compartments and regulate the initiation of epithelial stratification from the undifferentiated embryonal ectoderm. Required for limb formation from the apical ectodermal ridge. Activates transcription of the p21 promoter. This chain is Tumor protein 63 (TP63), found in Homo sapiens (Human).